A 544-amino-acid chain; its full sequence is uncharacterized protein (544 aa).

An N-terminal signal peptide occupies residues 1–22 (MYFSQNAIILVMLMFVISAVFY).

This is an uncharacterized protein from Methanocaldococcus jannaschii (strain ATCC 43067 / DSM 2661 / JAL-1 / JCM 10045 / NBRC 100440) (Methanococcus jannaschii).